The primary structure comprises 957 residues: Glycine dehydrogenase (decarboxylating) 2 (957 aa).

At K707 the chain carries N6-(pyridoxal phosphate)lysine.

Belongs to the GcvP family. The glycine cleavage system is composed of four proteins: P, T, L and H. It depends on pyridoxal 5'-phosphate as a cofactor.

The catalysed reaction is N(6)-[(R)-lipoyl]-L-lysyl-[glycine-cleavage complex H protein] + glycine + H(+) = N(6)-[(R)-S(8)-aminomethyldihydrolipoyl]-L-lysyl-[glycine-cleavage complex H protein] + CO2. The glycine cleavage system catalyzes the degradation of glycine. The P protein binds the alpha-amino group of glycine through its pyridoxal phosphate cofactor; CO(2) is released and the remaining methylamine moiety is then transferred to the lipoamide cofactor of the H protein. The sequence is that of Glycine dehydrogenase (decarboxylating) 2 from Pseudomonas fluorescens (strain ATCC BAA-477 / NRRL B-23932 / Pf-5).